Reading from the N-terminus, the 548-residue chain is Chaperonin GroEL (548 aa).

ATP contacts are provided by residues 29-32, Lys-50, 86-90, Gly-414, 478-480, and Asp-494; these read TMGP, DGTTT, and NAA.

The protein belongs to the chaperonin (HSP60) family. As to quaternary structure, forms a cylinder of 14 subunits composed of two heptameric rings stacked back-to-back. Interacts with the co-chaperonin GroES.

It localises to the cytoplasm. It catalyses the reaction ATP + H2O + a folded polypeptide = ADP + phosphate + an unfolded polypeptide.. Together with its co-chaperonin GroES, plays an essential role in assisting protein folding. The GroEL-GroES system forms a nano-cage that allows encapsulation of the non-native substrate proteins and provides a physical environment optimized to promote and accelerate protein folding. The protein is Chaperonin GroEL of Legionella pneumophila (strain Paris).